Reading from the N-terminus, the 350-residue chain is Selenide, water dikinase (350 aa).

Residue Cys-17 is part of the active site. Residues Lys-20 and 48-50 (LFD) contribute to the ATP site. Asp-51 is a binding site for Mg(2+). ATP is bound by residues Asp-68, Asp-91, and 139-141 (GHS). Residue Asp-91 participates in Mg(2+) binding. Residue Asp-229 coordinates Mg(2+).

It belongs to the selenophosphate synthase 1 family. Class I subfamily. As to quaternary structure, homodimer. The cofactor is Mg(2+).

The enzyme catalyses hydrogenselenide + ATP + H2O = selenophosphate + AMP + phosphate + 2 H(+). Its function is as follows. Synthesizes selenophosphate from selenide and ATP. This chain is Selenide, water dikinase, found in Bdellovibrio bacteriovorus (strain ATCC 15356 / DSM 50701 / NCIMB 9529 / HD100).